A 332-amino-acid polypeptide reads, in one-letter code: Fructose-bisphosphate aldolase (332 aa).

Serine 56 is a D-glyceraldehyde 3-phosphate binding site. Aspartate 93 serves as the catalytic Proton donor. Histidine 94, aspartate 115, glutamate 147, and histidine 191 together coordinate Zn(2+). Residue glycine 192 coordinates dihydroxyacetone phosphate. Residue histidine 234 participates in Zn(2+) binding. Dihydroxyacetone phosphate-binding positions include 235 to 237 (GAS) and 277 to 280 (NIDS).

This sequence belongs to the class II fructose-bisphosphate aldolase family. Homodimer. The cofactor is Zn(2+).

It catalyses the reaction beta-D-fructose 1,6-bisphosphate = D-glyceraldehyde 3-phosphate + dihydroxyacetone phosphate. The protein operates within carbohydrate degradation; glycolysis; D-glyceraldehyde 3-phosphate and glycerone phosphate from D-glucose: step 4/4. In terms of biological role, catalyzes the aldol condensation of dihydroxyacetone phosphate (DHAP or glycerone-phosphate) with glyceraldehyde 3-phosphate (G3P) to form fructose 1,6-bisphosphate (FBP) in gluconeogenesis and the reverse reaction in glycolysis. The polypeptide is Fructose-bisphosphate aldolase (fba) (Treponema pallidum (strain Nichols)).